A 239-amino-acid polypeptide reads, in one-letter code: tRNA (guanine-N(7)-)-methyltransferase (239 aa).

S-adenosyl-L-methionine-binding residues include Glu-69, Glu-94, Asp-121, and Asp-144. Asp-144 is a catalytic residue. Position 148 (Lys-148) interacts with substrate. The segment at 150–155 (RHNKRR) is interaction with RNA. Substrate contacts are provided by residues Asp-180 and 217 to 220 (TKFE).

The protein belongs to the class I-like SAM-binding methyltransferase superfamily. TrmB family. In terms of assembly, monomer.

The catalysed reaction is guanosine(46) in tRNA + S-adenosyl-L-methionine = N(7)-methylguanosine(46) in tRNA + S-adenosyl-L-homocysteine. It participates in tRNA modification; N(7)-methylguanine-tRNA biosynthesis. Catalyzes the formation of N(7)-methylguanine at position 46 (m7G46) in tRNA. In Pectobacterium atrosepticum (strain SCRI 1043 / ATCC BAA-672) (Erwinia carotovora subsp. atroseptica), this protein is tRNA (guanine-N(7)-)-methyltransferase.